The following is a 619-amino-acid chain: 4-hydroxyphenylalkanoate adenylyltransferase (619 aa).

The protein belongs to the ATP-dependent AMP-binding enzyme family.

The catalysed reaction is 17-(4-hydroxyphenyl)heptadecanoate + holo-[(phenol)carboxyphthiodiolenone synthase] + ATP = 17-(4-hydroxyphenyl)heptadecanoyl-[(phenol)carboxyphthiodiolenone synthase] + AMP + diphosphate. The enzyme catalyses 19-(4-hydroxyphenyl)nonadecanoate + holo-[(phenol)carboxyphthiodiolenone synthase] + ATP = 19-(4-hydroxyphenyl)nonadecanoyl-[(phenol)carboxyphthiodiolenone synthase] + AMP + diphosphate. It catalyses the reaction dodecanoate + ATP + H(+) = dodecanoyl-AMP + diphosphate. The protein operates within lipid metabolism; fatty acid biosynthesis. Catalyzes the activation of long-chain fatty acids as acyl-adenylates (acyl-AMP), which are then transferred to the multifunctional polyketide synthase PpsA for further chain extension. Involved in the biosynthesis of phenolphthiocerol, which is an important intermediate in the biosynthesis of phenolic glycolipid (PGL), also called mycosid B. The polypeptide is 4-hydroxyphenylalkanoate adenylyltransferase (fadD29) (Mycobacterium tuberculosis (strain ATCC 25618 / H37Rv)).